A 291-amino-acid chain; its full sequence is ATP synthase gamma chain (291 aa).

This sequence belongs to the ATPase gamma chain family. In terms of assembly, F-type ATPases have 2 components, CF(1) - the catalytic core - and CF(0) - the membrane proton channel. CF(1) has five subunits: alpha(3), beta(3), gamma(1), delta(1), epsilon(1). CF(0) has three main subunits: a, b and c.

It localises to the cell inner membrane. Produces ATP from ADP in the presence of a proton gradient across the membrane. The gamma chain is believed to be important in regulating ATPase activity and the flow of protons through the CF(0) complex. The sequence is that of ATP synthase gamma chain from Burkholderia ambifaria (strain MC40-6).